The primary structure comprises 360 residues: Threonine synthase (360 aa).

An N6-(pyridoxal phosphate)lysine modification is found at Lys69. Residues Asn95, 196–200 (GNAGN), and Thr326 contribute to the pyridoxal 5'-phosphate site.

The protein belongs to the threonine synthase family. Homodimer. Pyridoxal 5'-phosphate serves as cofactor.

The enzyme catalyses O-phospho-L-homoserine + H2O = L-threonine + phosphate. The protein operates within amino-acid biosynthesis; L-threonine biosynthesis; L-threonine from L-aspartate: step 5/5. Catalyzes the gamma-elimination of phosphate from L-phosphohomoserine and the beta-addition of water to produce L-threonine. The protein is Threonine synthase (thrC) of Mycobacterium bovis (strain ATCC BAA-935 / AF2122/97).